The following is a 233-amino-acid chain: Putative N-acetylmannosamine-6-phosphate 2-epimerase (233 aa).

This sequence belongs to the NanE family.

The enzyme catalyses an N-acyl-D-glucosamine 6-phosphate = an N-acyl-D-mannosamine 6-phosphate. It functions in the pathway amino-sugar metabolism; N-acetylneuraminate degradation; D-fructose 6-phosphate from N-acetylneuraminate: step 3/5. Its function is as follows. Converts N-acetylmannosamine-6-phosphate (ManNAc-6-P) to N-acetylglucosamine-6-phosphate (GlcNAc-6-P). The chain is Putative N-acetylmannosamine-6-phosphate 2-epimerase from Yersinia pestis bv. Antiqua (strain Antiqua).